The following is a 303-amino-acid chain: UDP-3-O-acyl-N-acetylglucosamine deacetylase (303 aa).

Residues H78, H237, and D241 each coordinate Zn(2+). H264 serves as the catalytic Proton donor.

The protein belongs to the LpxC family. The cofactor is Zn(2+).

It catalyses the reaction a UDP-3-O-[(3R)-3-hydroxyacyl]-N-acetyl-alpha-D-glucosamine + H2O = a UDP-3-O-[(3R)-3-hydroxyacyl]-alpha-D-glucosamine + acetate. It participates in glycolipid biosynthesis; lipid IV(A) biosynthesis; lipid IV(A) from (3R)-3-hydroxytetradecanoyl-[acyl-carrier-protein] and UDP-N-acetyl-alpha-D-glucosamine: step 2/6. Its function is as follows. Catalyzes the hydrolysis of UDP-3-O-myristoyl-N-acetylglucosamine to form UDP-3-O-myristoylglucosamine and acetate, the committed step in lipid A biosynthesis. The protein is UDP-3-O-acyl-N-acetylglucosamine deacetylase of Pseudomonas aeruginosa (strain LESB58).